A 56-amino-acid chain; its full sequence is Large ribosomal subunit protein bL32 (56 aa).

Residues 1 to 16 (MAVQKSKKSRAARGMR) are compositionally biased toward basic residues. The tract at residues 1 to 22 (MAVQKSKKSRAARGMRRSHDAL) is disordered.

The protein belongs to the bacterial ribosomal protein bL32 family.

The protein is Large ribosomal subunit protein bL32 of Photobacterium profundum (strain SS9).